Here is a 169-residue protein sequence, read N- to C-terminus: E1B protein, small T-antigen (169 aa).

The protein belongs to the adenoviridae E1B 19 kDa protein family.

This Canis lupus familiaris (Dog) protein is E1B protein, small T-antigen.